The chain runs to 136 residues: HTH-type transcriptional regulator LrpA (136 aa).

Residues 2–63 (IDEIDKKILD…EVNQVKLGFS (62 aa)) form the HTH asnC-type domain. The H-T-H motif DNA-binding region spans 21-40 (MKKLGEKVHLTAPATASRVV).

Negative regulation of glyA transcription and kinB-dependent sporulation. This chain is HTH-type transcriptional regulator LrpA (lrpA), found in Bacillus subtilis (strain 168).